Reading from the N-terminus, the 209-residue chain is Octanoyltransferase (209 aa).

A BPL/LPL catalytic domain is found at 30–209 (DHKPEIIYLV…IQTEFNKIFK (180 aa)). Residues 69-76 (RGGKFTFH), 143-145 (AIG), and 156-158 (GVA) each bind substrate. The active-site Acyl-thioester intermediate is the Cys-174.

Belongs to the LipB family.

It localises to the cytoplasm. It carries out the reaction octanoyl-[ACP] + L-lysyl-[protein] = N(6)-octanoyl-L-lysyl-[protein] + holo-[ACP] + H(+). It participates in protein modification; protein lipoylation via endogenous pathway; protein N(6)-(lipoyl)lysine from octanoyl-[acyl-carrier-protein]: step 1/2. Catalyzes the transfer of endogenously produced octanoic acid from octanoyl-acyl-carrier-protein onto the lipoyl domains of lipoate-dependent enzymes. Lipoyl-ACP can also act as a substrate although octanoyl-ACP is likely to be the physiological substrate. This is Octanoyltransferase from Rickettsia conorii (strain ATCC VR-613 / Malish 7).